The chain runs to 298 residues: tRNA pseudouridine synthase B (298 aa).

Asp-42 functions as the Nucleophile in the catalytic mechanism.

It belongs to the pseudouridine synthase TruB family. Type 1 subfamily.

It catalyses the reaction uridine(55) in tRNA = pseudouridine(55) in tRNA. Its function is as follows. Responsible for synthesis of pseudouridine from uracil-55 in the psi GC loop of transfer RNAs. This chain is tRNA pseudouridine synthase B, found in Mycobacterium tuberculosis (strain CDC 1551 / Oshkosh).